The following is a 766-amino-acid chain: Semaphorin-4E (766 aa).

A signal peptide spans 1–24 (MMSLLAVLCVLYVWSPAMLTGGLG). Over 25 to 664 (STLDSLPRKT…LHHVKEKERT (640 aa)) the chain is Extracellular. In terms of domain architecture, Sema spans 27–499 (LDSLPRKTVP…SEVGVVQLSI (473 aa)). An N-linked (GlcNAc...) asparagine glycan is attached at asparagine 52. 4 disulfide bridges follow: cysteine 100/cysteine 111, cysteine 129/cysteine 138, cysteine 261/cysteine 373, and cysteine 285/cysteine 329. Residue asparagine 433 is glycosylated (N-linked (GlcNAc...) asparagine). One can recognise a PSI domain in the interval 501 to 552 (ECGRYQTCLDCVLARDPHCGWDLDTEHCATINSIHRTRSSTVIQSLNDGDAS). Disulfide bonds link cysteine 502–cysteine 519 and cysteine 511–cysteine 528. Residues 555 to 640 (PAIGVSKPVN…QRKYQTQHVA (86 aa)) enclose the Ig-like C2-type domain. N-linked (GlcNAc...) asparagine glycosylation is found at asparagine 564 and asparagine 612. Residues cysteine 577 and cysteine 623 are joined by a disulfide bond. Residues 665-685 (LVAMVVILSLVLAALLIWNLY) traverse the membrane as a helical segment. The Cytoplasmic portion of the chain corresponds to 686–766 (KGHLSLPCLH…LKYIDDESEI (81 aa)). The interval 724–750 (FNSNNNHANDQRYSSSRETDRLSTTAG) is disordered.

Belongs to the semaphorin family.

Its subcellular location is the membrane. This chain is Semaphorin-4E (sema4e), found in Danio rerio (Zebrafish).